The chain runs to 1673 residues: Glutamine and serine-rich protein 1 (1673 aa).

Disordered regions lie at residues 265 to 322, 411 to 543, 872 to 892, 923 to 961, 1050 to 1081, 1149 to 1182, 1216 to 1272, and 1390 to 1476; these read VIPS…SSQA, DQTR…KSYV, RHMS…LSIN, QDLP…PKEG, DENA…QYSS, VIRP…KAEE, LSAL…EQLA, and KSKV…PPPI. Positions 289–309 are enriched in polar residues; the sequence is SSKTPKSQSVVSPELTQSYTK. Low complexity-rich tracts occupy residues 310–322 and 411–458; these read SSQN…SSQA and DQTR…PSDS. The segment covering 459 to 539 has biased composition (polar residues); sequence YTSGQNQTLA…MQNSRTTADS (81 aa). The segment covering 947–956 has biased composition (polar residues); sequence NIKNPPNVNQ. The segment covering 1222–1233 has biased composition (basic and acidic residues); the sequence is NSEKRLKTEGDK. Polar residues-rich tracts occupy residues 1259–1272 and 1397–1411; these read KPSQ…EQLA and ARTT…SKVS. The segment covering 1435–1451 has biased composition (basic and acidic residues); it reads TKAEPPPKKRKQWKEEF. The span at 1452 to 1462 shows a compositional bias: low complexity; that stretch reads SSSQSDSSPDM.

Its subcellular location is the chromosome. Functionally, plays an essential role in the protection and maintenance of transcriptional and developmental programs. Protects many bivalent promoters and poised enhancers from hypermethylation, showing a marked preference for these regulatory elements over other types of promoters or enhancers. Mechanistically, cooperates with tet1 and binds to DNA in a common complex to inhibit the binding of dnmt3a/3b and therefore de novo methylation. This Xenopus laevis (African clawed frog) protein is Glutamine and serine-rich protein 1 (qser1).